A 428-amino-acid chain; its full sequence is D-amino acid dehydrogenase (428 aa).

3–17 (VVVLGSGVVGVASAY) provides a ligand contact to FAD.

Belongs to the DadA oxidoreductase family. Requires FAD as cofactor.

It catalyses the reaction a D-alpha-amino acid + A + H2O = a 2-oxocarboxylate + AH2 + NH4(+). Its pathway is amino-acid degradation; D-alanine degradation; NH(3) and pyruvate from D-alanine: step 1/1. Oxidative deamination of D-amino acids. In Burkholderia ambifaria (strain MC40-6), this protein is D-amino acid dehydrogenase.